The sequence spans 503 residues: SWI/SNF and RSC complexes subunit ssr2 (503 aa).

Residues 18 to 115 form the SWIRM domain; it reads IIVPSYAGWF…YQIDPETRPA (98 aa). Position 175 is a phosphoserine (serine 175). Residues 188-242 form a ZZ-type; degenerate zinc finger; that stretch reads RVDKVCFTCGVNCSQTWYHNLKNKKYDICPNCYKQGRFSSSFNSSDFLCMDAIDF. Residues cysteine 193, cysteine 196, cysteine 216, and cysteine 219 each contribute to the Zn(2+) site. The 52-residue stretch at 245-296 folds into the SANT domain; that stretch reads DEEKPWSNQETLLLLEAIETYGDDWNQIALHVGSRTKEQCLIHFLQIPIEDP. Position 306 is a phosphoserine (serine 306).

Belongs to the SMARCC family. As to quaternary structure, component of the RSC complex composed of at least arp9, arp42, rsc1, rsc4, rsc7, rsc9, rsc58, sfh1, snf21, ssr1, ssr2, ssr3 and ssr4. The complex interacts with histone and histone variant components of centromeric chromatin. Component of the SWI/SNF global transcription activator complex composed of at least arp9, arp42, snf5, snf22, snf30, sbf59, sol1, ssr1, ssr2, ssr3, ssr4 and tfg3.

Its subcellular location is the cytoplasm. It is found in the nucleus. Its function is as follows. Component of the chromatin structure remodeling complex (RSC), which is involved in transcription regulation and nucleosome positioning. Controls particularly membrane and organelle development genes. Part of the SWI/SNF complex, an ATP-dependent chromatin remodeling complex, required for the positive and negative regulation of gene expression of a large number of genes. It changes chromatin structure by altering DNA-histone contacts within a nucleosome, leading eventually to a change in nucleosome position, thus facilitating or repressing binding of gene-specific transcription factors. This chain is SWI/SNF and RSC complexes subunit ssr2 (ssr2), found in Schizosaccharomyces pombe (strain 972 / ATCC 24843) (Fission yeast).